The following is a 59-amino-acid chain: MAVPKRKTSPSKRGMRRSHDSLKVEAFQECPNCGELKRPHNLCNACGHYNGREVVSVGA.

The segment covering 1 to 16 (MAVPKRKTSPSKRGMR) has biased composition (basic residues). Positions 1-20 (MAVPKRKTSPSKRGMRRSHD) are disordered.

This sequence belongs to the bacterial ribosomal protein bL32 family.

In Sphingopyxis alaskensis (strain DSM 13593 / LMG 18877 / RB2256) (Sphingomonas alaskensis), this protein is Large ribosomal subunit protein bL32.